We begin with the raw amino-acid sequence, 635 residues long: Threonine--tRNA ligase (635 aa).

A TGS domain is found at 1-61 (MPVIRLPDGS…TDDADLSIIT (61 aa)). The catalytic stretch occupies residues 242–533 (DHRKLGRQLD…LIENYAGAMP (292 aa)). Cys-333, His-384, and His-510 together coordinate Zn(2+).

This sequence belongs to the class-II aminoacyl-tRNA synthetase family. Homodimer. Zn(2+) is required as a cofactor.

The protein resides in the cytoplasm. The enzyme catalyses tRNA(Thr) + L-threonine + ATP = L-threonyl-tRNA(Thr) + AMP + diphosphate + H(+). In terms of biological role, catalyzes the attachment of threonine to tRNA(Thr) in a two-step reaction: L-threonine is first activated by ATP to form Thr-AMP and then transferred to the acceptor end of tRNA(Thr). Also edits incorrectly charged L-seryl-tRNA(Thr). The sequence is that of Threonine--tRNA ligase from Methylobacillus flagellatus (strain ATCC 51484 / DSM 6875 / VKM B-1610 / KT).